The chain runs to 342 residues: 4-hydroxy-3-methylbut-2-enyl diphosphate reductase (342 aa).

Position 47 (C47) interacts with [4Fe-4S] cluster. (2E)-4-hydroxy-3-methylbut-2-enyl diphosphate is bound by residues H78 and H111. Residues H78 and H111 each coordinate dimethylallyl diphosphate. Residues H78 and H111 each coordinate isopentenyl diphosphate. C133 contacts [4Fe-4S] cluster. (2E)-4-hydroxy-3-methylbut-2-enyl diphosphate is bound at residue H161. H161 serves as a coordination point for dimethylallyl diphosphate. H161 is an isopentenyl diphosphate binding site. E163 (proton donor) is an active-site residue. T201 is a (2E)-4-hydroxy-3-methylbut-2-enyl diphosphate binding site. C231 is a binding site for [4Fe-4S] cluster. S259, S260, N261, and S303 together coordinate (2E)-4-hydroxy-3-methylbut-2-enyl diphosphate. Dimethylallyl diphosphate is bound by residues S259, S260, N261, and S303. Isopentenyl diphosphate-binding residues include S259, S260, N261, and S303.

It belongs to the IspH family. It depends on [4Fe-4S] cluster as a cofactor.

It catalyses the reaction isopentenyl diphosphate + 2 oxidized [2Fe-2S]-[ferredoxin] + H2O = (2E)-4-hydroxy-3-methylbut-2-enyl diphosphate + 2 reduced [2Fe-2S]-[ferredoxin] + 2 H(+). It carries out the reaction dimethylallyl diphosphate + 2 oxidized [2Fe-2S]-[ferredoxin] + H2O = (2E)-4-hydroxy-3-methylbut-2-enyl diphosphate + 2 reduced [2Fe-2S]-[ferredoxin] + 2 H(+). The protein operates within isoprenoid biosynthesis; dimethylallyl diphosphate biosynthesis; dimethylallyl diphosphate from (2E)-4-hydroxy-3-methylbutenyl diphosphate: step 1/1. It functions in the pathway isoprenoid biosynthesis; isopentenyl diphosphate biosynthesis via DXP pathway; isopentenyl diphosphate from 1-deoxy-D-xylulose 5-phosphate: step 6/6. Functionally, catalyzes the conversion of 1-hydroxy-2-methyl-2-(E)-butenyl 4-diphosphate (HMBPP) into a mixture of isopentenyl diphosphate (IPP) and dimethylallyl diphosphate (DMAPP). Acts in the terminal step of the DOXP/MEP pathway for isoprenoid precursor biosynthesis. The protein is 4-hydroxy-3-methylbut-2-enyl diphosphate reductase of Anaplasma marginale (strain St. Maries).